The following is a 483-amino-acid chain: Chromosomal replication initiator protein DnaA (483 aa).

The domain I, interacts with DnaA modulators stretch occupies residues M1–R71. The segment at R71–S145 is domain II. The domain III, AAA+ region stretch occupies residues R146–A362. G190, G192, K193, and T194 together coordinate ATP. The domain IV, binds dsDNA stretch occupies residues R363–G483.

Belongs to the DnaA family. Oligomerizes as a right-handed, spiral filament on DNA at oriC.

It is found in the cytoplasm. Functionally, plays an essential role in the initiation and regulation of chromosomal replication. ATP-DnaA binds to the origin of replication (oriC) to initiate formation of the DNA replication initiation complex once per cell cycle. Binds the DnaA box (a 9 base pair repeat at the origin) and separates the double-stranded (ds)DNA. Forms a right-handed helical filament on oriC DNA; dsDNA binds to the exterior of the filament while single-stranded (ss)DNA is stabiized in the filament's interior. The ATP-DnaA-oriC complex binds and stabilizes one strand of the AT-rich DNA unwinding element (DUE), permitting loading of DNA polymerase. After initiation quickly degrades to an ADP-DnaA complex that is not apt for DNA replication. Binds acidic phospholipids. The polypeptide is Chromosomal replication initiator protein DnaA (Bordetella avium (strain 197N)).